Here is a 509-residue protein sequence, read N- to C-terminus: Dihydrolipoyl dehydrogenase, mitochondrial (509 aa).

The transit peptide at Met1–Tyr35 directs the protein to the mitochondrion. An N6-acetyllysine; alternate modification is found at Lys66. Residue Lys66 is modified to N6-succinyllysine; alternate. Residues Glu71–Cys80 and Lys89 contribute to the FAD site. An intrachain disulfide couples Cys80 to Cys85. N6-acetyllysine; alternate occurs at positions 104, 122, 132, and 143. N6-succinyllysine; alternate occurs at positions 104, 122, 132, and 143. Gly154 is a binding site for FAD. 2 positions are modified to N6-succinyllysine: Lys159 and Lys166. Thr183–Ser185 is a binding site for FAD. NAD(+) is bound by residues Gly220–Glu227 and Glu243. An N6-succinyllysine mark is found at Lys273 and Lys277. Val278 is a binding site for NAD(+). Ser285 and Ser297 each carry phosphoserine. NAD(+) is bound at residue Gly314. An N6-acetyllysine; alternate modification is found at Lys334. Lys334 bears the N6-succinyllysine; alternate mark. Position 346 is an N6-acetyllysine (Lys346). FAD is bound by residues Asp355 and Met361–His364. Position 410 is an N6-acetyllysine; alternate (Lys410). Lys410 is modified (N6-succinyllysine; alternate). N6-acetyllysine occurs at positions 417 and 420. Residue Lys430 is modified to N6-succinyllysine. His487 functions as the Proton acceptor in the catalytic mechanism. Lys505 is subject to N6-acetyllysine; alternate. Position 505 is an N6-succinyllysine; alternate (Lys505).

It belongs to the class-I pyridine nucleotide-disulfide oxidoreductase family. As to quaternary structure, homodimer. Part of the multimeric pyruvate dehydrogenase complex that contains multiple copies of pyruvate dehydrogenase (subunits PDHA (PDHA1 or PDHA2) and PDHB, E1), dihydrolipoamide acetyltransferase (DLAT, E2) and lipoamide dehydrogenase (DLD, E3). These subunits are bound to an inner core composed of about 48 DLAT and 12 PDHX molecules (by non covalent bonds). The 2-oxoglutarate dehydrogenase complex is composed of OGDH (2-oxoglutarate dehydrogenase; E1), DLST (dihydrolipoamide succinyltransferase; E2), DLD (dihydrolipoamide dehydrogenase; E3) and the assembly factor KGD4. It contains multiple copies of the three enzymatic components (E1, E2 and E3). In the nucleus, the 2-oxoglutarate dehydrogenase complex associates with KAT2A. Interacts with PDHX. The cofactor is FAD. Tyrosine phosphorylated. Expressed in liver (at protein level).

The protein localises to the mitochondrion matrix. Its subcellular location is the nucleus. The protein resides in the cell projection. It is found in the cilium. It localises to the flagellum. The protein localises to the cytoplasmic vesicle. Its subcellular location is the secretory vesicle. The protein resides in the acrosome. The enzyme catalyses N(6)-[(R)-dihydrolipoyl]-L-lysyl-[protein] + NAD(+) = N(6)-[(R)-lipoyl]-L-lysyl-[protein] + NADH + H(+). In terms of biological role, lipoamide dehydrogenase is a component of the glycine cleavage system as well as an E3 component of three alpha-ketoacid dehydrogenase complexes (pyruvate-, alpha-ketoglutarate-, and branched-chain amino acid-dehydrogenase complex). The 2-oxoglutarate dehydrogenase complex is mainly active in the mitochondrion. A fraction of the 2-oxoglutarate dehydrogenase complex also localizes in the nucleus and is required for lysine succinylation of histones: associates with KAT2A on chromatin and provides succinyl-CoA to histone succinyltransferase KAT2A. In monomeric form may have additional moonlighting function as serine protease. Involved in the hyperactivation of spermatazoa during capacitation and in the spermatazoal acrosome reaction. This chain is Dihydrolipoyl dehydrogenase, mitochondrial (Dld), found in Mus musculus (Mouse).